The primary structure comprises 1176 residues: Translation initiation factor IF-2 (1176 aa).

Composition is skewed to low complexity over residues 32–44 (IAAKSHSSSISDS), 57–79 (ASPSQPTAPAAKPAPAKPAAGKS), 94–166 (APVA…AAPS), and 193–235 (KPTP…VKPT). Disordered stretches follow at residues 32 to 502 (IAAK…QRQK) and 535 to 567 (RPAKPKAQQRTAPKPVAAVRKRRKETARQRQRR). Over residues 251-270 (APPPASTPRPAPSRPTPRPA) the composition is skewed to pro residues. Composition is skewed to low complexity over residues 388–409 (GRPGAPTRPGAPTRPGMPGGMR) and 439–469 (NRPTEAAGTATPPVARPTAPSAPRRPGFRPG). The span at 478–492 (GRPDWDDSAKLEALR) shows a compositional bias: basic and acidic residues. Residues 553–567 (VRKRRKETARQRQRR) are compositionally biased toward basic residues. The tr-type G domain occupies 668–840 (RRPPVVTVMG…LLLVTEVEDL (173 aa)). Residues 677–684 (GHVDHGKT) form a G1 region. GTP is bound at residue 677 to 684 (GHVDHGKT). The G2 stretch occupies residues 702–706 (GITQH). Residues 727–730 (DTPG) are G3. Residues 727 to 731 (DTPGH) and 781 to 784 (NKID) contribute to the GTP site. Residues 781-784 (NKID) are G4. The G5 stretch occupies residues 817–819 (SAI).

The protein belongs to the TRAFAC class translation factor GTPase superfamily. Classic translation factor GTPase family. IF-2 subfamily.

The protein localises to the cytoplasm. One of the essential components for the initiation of protein synthesis. Protects formylmethionyl-tRNA from spontaneous hydrolysis and promotes its binding to the 30S ribosomal subunits. Also involved in the hydrolysis of GTP during the formation of the 70S ribosomal complex. This chain is Translation initiation factor IF-2, found in Synechococcus sp. (strain CC9902).